Here is a 187-residue protein sequence, read N- to C-terminus: Signal peptidase complex catalytic subunit SEC11 (187 aa).

Residues 1–18 (MLSSLSPYMANPRNTLSQ) lie on the Cytoplasmic side of the membrane. The helical; Signal-anchor for type II membrane protein transmembrane segment at 19–39 (VLNFGLVLSSAFMVWKALSVI) threads the bilayer. Residues 40-187 (TNSASPVVVV…MGLMVMLQRE (148 aa)) lie on the Lumenal side of the membrane. Catalysis depends on charge relay system residues serine 53 and histidine 92. A glycan (N-linked (GlcNAc...) asparagine) is linked at asparagine 125. Residue aspartate 129 is the Charge relay system of the active site. The interval 173–184 (VLLGFMGLMVML) is C-terminal short (CTS) helix.

The protein belongs to the peptidase S26B family. In terms of assembly, component of the signal peptidase complex (SPC) composed of a catalytic subunit SEC11 and three accessory subunits SPC1, SPC2 and SPC3. The complex induces a local thinning of the ER membrane which is used to measure the length of the signal peptide (SP) h-region of protein substrates. This ensures the selectivity of the complex towards h-regions shorter than 18-20 amino acids. SPC associates with the translocon complex.

The protein localises to the endoplasmic reticulum membrane. It catalyses the reaction Cleavage of hydrophobic, N-terminal signal or leader sequences from secreted and periplasmic proteins.. Its function is as follows. Catalytic component of the signal peptidase complex (SPC) which catalyzes the cleavage of N-terminal signal sequences from nascent proteins as they are translocated into the lumen of the endoplasmic reticulum. Specifically cleaves N-terminal signal peptides that contain a hydrophobic alpha-helix (h-region) shorter than 18-20 amino acids. In Ajellomyces capsulatus (strain G186AR / H82 / ATCC MYA-2454 / RMSCC 2432) (Darling's disease fungus), this protein is Signal peptidase complex catalytic subunit SEC11 (SEC11).